The primary structure comprises 305 residues: Ribonucleoside-diphosphate reductase small subunit (305 aa).

Fe cation is bound by residues glutamate 64, glutamate 94, and histidine 97. Residue tyrosine 101 is part of the active site. The chain crosses the membrane as a helical span at residues 150-170; the sequence is VLIFYLIEGVFFISSFYCIGL. 3 residues coordinate Fe cation: glutamate 157, glutamate 191, and histidine 194.

It belongs to the ribonucleoside diphosphate reductase small chain family. Heterotetramer composed of a homodimer of the large subunit (R1) and a homodimer of the small subunit (R2). Larger multisubunit protein complex are also active, composed of (R1)n(R2)n. The cofactor is Fe cation.

The protein localises to the host membrane. The catalysed reaction is a 2'-deoxyribonucleoside 5'-diphosphate + [thioredoxin]-disulfide + H2O = a ribonucleoside 5'-diphosphate + [thioredoxin]-dithiol. Ribonucleoside-diphosphate reductase holoenzyme provides the precursors necessary for viral DNA synthesis. Allows virus growth in non-dividing cells, as well as reactivation from latency in infected hosts. Catalyzes the biosynthesis of deoxyribonucleotides from the corresponding ribonucleotides. The chain is Ribonucleoside-diphosphate reductase small subunit from Alcelaphine herpesvirus 1 (strain C500) (AlHV-1).